A 208-amino-acid polypeptide reads, in one-letter code: Uracil phosphoribosyltransferase (208 aa).

Residues R78, R103, and 130–138 (DPMLATGGS) contribute to the 5-phospho-alpha-D-ribose 1-diphosphate site. Residues I193 and 198 to 200 (GDA) each bind uracil. 5-phospho-alpha-D-ribose 1-diphosphate is bound at residue D199.

Belongs to the UPRTase family. It depends on Mg(2+) as a cofactor.

It catalyses the reaction UMP + diphosphate = 5-phospho-alpha-D-ribose 1-diphosphate + uracil. The protein operates within pyrimidine metabolism; UMP biosynthesis via salvage pathway; UMP from uracil: step 1/1. With respect to regulation, allosterically activated by GTP. Its function is as follows. Catalyzes the conversion of uracil and 5-phospho-alpha-D-ribose 1-diphosphate (PRPP) to UMP and diphosphate. The protein is Uracil phosphoribosyltransferase of Roseiflexus sp. (strain RS-1).